A 280-amino-acid chain; its full sequence is uncharacterized protein (280 aa).

N-linked (GlcNAc...) asparagine; by host glycosylation is found at asparagine 75, asparagine 98, asparagine 107, asparagine 143, asparagine 158, asparagine 170, asparagine 192, asparagine 207, asparagine 224, and asparagine 230. The chain crosses the membrane as a helical span at residues alanine 235–valine 255.

This sequence belongs to the RL11 family.

It is found in the host membrane. This is an uncharacterized protein from Human cytomegalovirus (strain Merlin) (HHV-5).